A 427-amino-acid chain; its full sequence is UPF0229 protein YeaH (427 aa).

Residues 79–90 (NDHFVQNDRIER) are compositionally biased toward basic and acidic residues. Positions 79–110 (NDHFVQNDRIERPQGGGGGSGSGQGQASQDGE) are disordered. Gly residues predominate over residues 92–102 (QGGGGGSGSGQ).

Belongs to the UPF0229 family.

The polypeptide is UPF0229 protein YeaH (Escherichia coli O139:H28 (strain E24377A / ETEC)).